The following is a 166-amino-acid chain: Protein-export protein SecB (166 aa).

Belongs to the SecB family. Homotetramer, a dimer of dimers. One homotetramer interacts with 1 SecA dimer.

It localises to the cytoplasm. Its function is as follows. One of the proteins required for the normal export of preproteins out of the cell cytoplasm. It is a molecular chaperone that binds to a subset of precursor proteins, maintaining them in a translocation-competent state. It also specifically binds to its receptor SecA. This is Protein-export protein SecB from Roseobacter denitrificans (strain ATCC 33942 / OCh 114) (Erythrobacter sp. (strain OCh 114)).